The primary structure comprises 538 residues: Cytochrome c-552 (538 aa).

The first 55 residues, 1–55, serve as a signal peptide directing secretion; it reads MKIYLRFVWILIIILNFLLNLFITTNGVIIVNAFKKSLIVAASFASLSLFNSATA. Histidine 133 lines the heme c pocket. The heme site is built by cysteine 161, cysteine 164, and lysine 165. Heme c contacts are provided by cysteine 199, cysteine 202, histidine 203, cysteine 264, cysteine 267, and histidine 268. Glutamate 270, tyrosine 271, lysine 316, and glutamine 318 together coordinate Ca(2+). Tyrosine 271 contacts substrate. Histidine 319 contacts substrate. Residues histidine 330, cysteine 337, cysteine 340, histidine 341, histidine 356, cysteine 369, cysteine 372, histidine 373, and histidine 448 each contribute to the heme c site.

The protein belongs to the cytochrome c-552 family. Requires Ca(2+) as cofactor. It depends on heme c as a cofactor.

It is found in the periplasm. The catalysed reaction is 6 Fe(III)-[cytochrome c] + NH4(+) + 2 H2O = 6 Fe(II)-[cytochrome c] + nitrite + 8 H(+). It functions in the pathway nitrogen metabolism; nitrate reduction (assimilation). Catalyzes the reduction of nitrite to ammonia, consuming six electrons in the process. The chain is Cytochrome c-552 from Haemophilus influenzae (strain ATCC 51907 / DSM 11121 / KW20 / Rd).